The chain runs to 195 residues: Imidazoleglycerol-phosphate dehydratase (195 aa).

Belongs to the imidazoleglycerol-phosphate dehydratase family.

The protein localises to the cytoplasm. The catalysed reaction is D-erythro-1-(imidazol-4-yl)glycerol 3-phosphate = 3-(imidazol-4-yl)-2-oxopropyl phosphate + H2O. Its pathway is amino-acid biosynthesis; L-histidine biosynthesis; L-histidine from 5-phospho-alpha-D-ribose 1-diphosphate: step 6/9. The protein is Imidazoleglycerol-phosphate dehydratase of Geobacillus kaustophilus (strain HTA426).